Consider the following 102-residue polypeptide: Small ribosomal subunit protein uS10 (102 aa).

This sequence belongs to the universal ribosomal protein uS10 family. In terms of assembly, part of the 30S ribosomal subunit.

Its function is as follows. Involved in the binding of tRNA to the ribosomes. The chain is Small ribosomal subunit protein uS10 from Clostridium acetobutylicum (strain ATCC 824 / DSM 792 / JCM 1419 / IAM 19013 / LMG 5710 / NBRC 13948 / NRRL B-527 / VKM B-1787 / 2291 / W).